A 910-amino-acid chain; its full sequence is Protein translocase subunit SecA (910 aa).

ATP contacts are provided by residues Gln87, 105-109, and Asp508; that span reads GEGKT. A disordered region spans residues 848-910; that stretch reads RLSQSQFQHQ…KYKHCHGQLS (63 aa). Low complexity predominate over residues 869 to 880; sequence AQVQAAQQGVAQ. 4 residues coordinate Zn(2+): Cys894, Cys896, Cys905, and His906. Basic residues predominate over residues 900-910; that stretch reads KKYKHCHGQLS.

Belongs to the SecA family. Monomer and homodimer. Part of the essential Sec protein translocation apparatus which comprises SecA, SecYEG and auxiliary proteins SecDF-YajC and YidC. Zn(2+) is required as a cofactor.

Its subcellular location is the cell inner membrane. It localises to the cytoplasm. It catalyses the reaction ATP + H2O + cellular proteinSide 1 = ADP + phosphate + cellular proteinSide 2.. Functionally, part of the Sec protein translocase complex. Interacts with the SecYEG preprotein conducting channel. Has a central role in coupling the hydrolysis of ATP to the transfer of proteins into and across the cell membrane, serving both as a receptor for the preprotein-SecB complex and as an ATP-driven molecular motor driving the stepwise translocation of polypeptide chains across the membrane. This chain is Protein translocase subunit SecA, found in Stenotrophomonas maltophilia (strain K279a).